Consider the following 447-residue polypeptide: Trigger factor (447 aa).

In terms of domain architecture, PPIase FKBP-type spans 164–249; it reads GNQVTFDFEG…VKLVEKSKLP (86 aa).

This sequence belongs to the FKBP-type PPIase family. Tig subfamily.

The protein resides in the cytoplasm. The catalysed reaction is [protein]-peptidylproline (omega=180) = [protein]-peptidylproline (omega=0). Its function is as follows. Involved in protein export. Acts as a chaperone by maintaining the newly synthesized protein in an open conformation. Functions as a peptidyl-prolyl cis-trans isomerase. The chain is Trigger factor from Psychrobacter arcticus (strain DSM 17307 / VKM B-2377 / 273-4).